The sequence spans 791 residues: Valine--tRNA ligase (791 aa).

A 'HIGH' region motif is present at residues proline 40–histidine 50. The 'KMSKS' region motif lies at lysine 521–serine 525. An ATP-binding site is contributed by lysine 524.

This sequence belongs to the class-I aminoacyl-tRNA synthetase family. ValS type 2 subfamily.

It localises to the cytoplasm. It carries out the reaction tRNA(Val) + L-valine + ATP = L-valyl-tRNA(Val) + AMP + diphosphate. Its function is as follows. Catalyzes the attachment of valine to tRNA(Val). As ValRS can inadvertently accommodate and process structurally similar amino acids such as threonine, to avoid such errors, it has a 'posttransfer' editing activity that hydrolyzes mischarged Thr-tRNA(Val) in a tRNA-dependent manner. The chain is Valine--tRNA ligase from Thermoplasma acidophilum (strain ATCC 25905 / DSM 1728 / JCM 9062 / NBRC 15155 / AMRC-C165).